Consider the following 776-residue polypeptide: Zinc finger CCCH-type antiviral protein 1 (776 aa).

Ala-2 bears the N-acetylalanine mark. Residues 2 to 254 (ADPGVCCFIT…DRSKSRDRFL (253 aa)) form an N-terminal domain region. Residues 69-76 (RARVCRRK) carry the Nuclear localization signal motif. C3H1-type zinc fingers lie at residues 73–86 (CRRK…DSLH), 88–110 (CKLN…KYSH), 150–172 (CKSY…ERLH), and 169–193 (ERLH…SHNL). The tract at residues 221-249 (NKHARRNPPGTRAAHPHRRGGAHRDRSKS) is disordered. A binding to EXOSC5 region spans residues 224–254 (ARRNPPGTRAAHPHRRGGAHRDRSKSRDRFL). 4 positions are modified to phosphoserine; by GSK3-beta: Ser-257, Ser-262, Ser-266, and Ser-270. Position 274 is a phosphoserine (Ser-274). Phosphothreonine is present on Thr-278. Ser-283 is subject to Phosphoserine. The Nuclear export signal motif lies at 284 to 291 (LEDVSVDV). Residues 308–355 (PVSSKAAGVQGPSQMRASQEFSEDGNLDDIFSRNRSDSSSSRASAAKV) form a disordered region. Residues 318-327 (GPSQMRASQE) are compositionally biased toward polar residues. Residues Ser-325, Ser-351, and Ser-398 each carry the phosphoserine modification. Residues 344 to 353 (DSSSSRASAA) are compositionally biased toward low complexity. The short motif at 405–406 (KK) is the Nuclear localization signal element. Residues 457–483 (WASASTHNAPNGSSQIMDETPNVSKSS) are disordered. Polar residues predominate over residues 459–483 (SASTHNAPNGSSQIMDETPNVSKSS). At Tyr-501 the chain carries Phosphotyrosine. The disordered stretch occupies residues 512 to 562 (LAVPGEATTPVQSNRLPQSPLSSSSHRAAASGSPGKNSTHTSVSPAIESSR). Over residues 523-546 (QSNRLPQSPLSSSSHRAAASGSPG) the composition is skewed to low complexity. A phosphoserine mark is found at Ser-544 and Ser-667. Residues 671 to 758 (YEEKPLSAVF…ASKTQRHVVR (88 aa)) enclose the WWE domain.

It belongs to the ARTD/PARP family. In terms of assembly, homodimer or homooligomer. Homooligomerization is essential for its antiviral activity. Interacts with EXOSC5. Interacts with EXOSC3, EXOSC7, DCP2 and DCP1A. Interacts with PARN in an RNA-independent manner. Interacts with XRN1 in an RNA-dependent manner. Interacts (via N-terminal domain) with DHX30 (via N-terminus) in an RNA-independent manner. Interacts (via N-terminal domain) with DDX17 in an RNA-independent manner. Post-translationally, phosphorylation at Ser-274 is essential for sequential phosphorylation of Ser-270, Ser-266, Ser-262 and Ser-257 by GSK3-beta. Phosphorylation by GSK3-beta enhances its antiviral activity. As to expression, expressed in the kidney and liver.

The protein resides in the cytoplasm. Its subcellular location is the nucleus. Its function is as follows. Antiviral protein which inhibits the replication of viruses by recruiting the cellular RNA degradation machineries to degrade the viral mRNAs. Binds to a ZAP-responsive element (ZRE) present in the target viral mRNA, recruits cellular poly(A)-specific ribonuclease PARN to remove the poly(A) tail, and the 3'-5' exoribonuclease complex exosome to degrade the RNA body from the 3'-end. It also recruits the decapping complex DCP1-DCP2 through RNA helicase p72 (DDX17) to remove the cap structure of the viral mRNA to initiate its degradation from the 5'-end. Its target viruses belong to families which include retroviridae: human immunodeficiency virus type 1 (HIV-1) and moloney and murine leukemia virus (MoMLV), filoviridae: ebola virus (EBOV) and marburg virus (MARV), togaviridae: sindbis virus (SINV) and Ross river virus (RRV). Specifically targets the multiply spliced but not unspliced or singly spliced HIV-1 mRNAs for degradation. In Rattus norvegicus (Rat), this protein is Zinc finger CCCH-type antiviral protein 1 (Zc3hav1).